A 468-amino-acid chain; its full sequence is Probable acid phosphatase DIA3 (468 aa).

Positions 1-20 are cleaved as a signal peptide; sequence MVKPVIFAICLGVLLSKALS. The active-site Nucleophile is histidine 76. N-linked (GlcNAc...) asparagine glycosylation is found at asparagine 98, asparagine 163, asparagine 193, asparagine 202, asparagine 238, asparagine 251, and asparagine 316. Aspartate 339 serves as the catalytic Proton donor. N-linked (GlcNAc...) asparagine glycans are attached at residues asparagine 357, asparagine 391, asparagine 457, and asparagine 462.

The protein belongs to the histidine acid phosphatase family.

It carries out the reaction a phosphate monoester + H2O = an alcohol + phosphate. In Saccharomyces cerevisiae (strain ATCC 204508 / S288c) (Baker's yeast), this protein is Probable acid phosphatase DIA3 (DIA3).